A 722-amino-acid polypeptide reads, in one-letter code: MQGQTTSVSFDGREIRLTTGRYAPQAGGSVLIECGDTAVLVTATQGQGREGADFLPLSCDYEERLYAAGRIPGSFMRREGRPPERATLISRLIDRPLRPLFPNWMRDDIQVVATCLSLDERVPADILAVTGSSMATLLAGIPFYGPMAAVRVGLLGDDFVLNPSFREIERGDLDLVVAGTPDGVVMVEAGSNQLTEQDVIEAIDFGYEAVNELIKAQESILKDSGLTQIKPEKPDLDETVPSYLEKNCTKPISALLKEFDLSKEDRDLKLDEIKTNCAEKIDSLKDDNAVKKSITTNTKLLGISFKALTKKLMREQIIKDGKRVDGRALDEVREISAEAGILPKRVHGSGLFQRGLTQVLSTATLGTPSDAQEMDDLNPSPDKTYIHHYNFPPYSVGETRPMRTPGRREVGHGALAERAIIPVLPPKESFPYVLRVVSEVLSSNGSTSMGSVCGSTIALLDAGVPLKAPVSGAAMGLIKEGEEVRILTDIQGIEDFLGDMDFKVAGTEKGITALQMDMKMTGLPIKIIGEAINQAKPARTHILEKMVQAIDKPRETLSPHAPRLLSFRIDPELIGTVIGPGGRTIKGITERTNTKIDIEDGGIVTIASHDGVAAEEAQKIIEGLTRKVHEGEVFTGSITRIIPIGAFVEILPGKEGMIHISQLSEARVEKVEDVVKVGDEVTVRVREIDNRGRINLTLRGIPQNGDMQYYPQPTPTPVAPLM.

Aspartate 495 and aspartate 501 together coordinate Mg(2+). Positions 562 to 621 (PRLLSFRIDPELIGTVIGPGGRTIKGITERTNTKIDIEDGGIVTIASHDGVAAEEAQKII) constitute a KH domain. One can recognise an S1 motif domain in the interval 631–699 (GEVFTGSITR…NRGRINLTLR (69 aa)).

The protein belongs to the polyribonucleotide nucleotidyltransferase family. The cofactor is Mg(2+).

The protein resides in the cytoplasm. It catalyses the reaction RNA(n+1) + phosphate = RNA(n) + a ribonucleoside 5'-diphosphate. Its function is as follows. Involved in mRNA degradation. Catalyzes the phosphorolysis of single-stranded polyribonucleotides processively in the 3'- to 5'-direction. In Prochlorococcus marinus (strain SARG / CCMP1375 / SS120), this protein is Polyribonucleotide nucleotidyltransferase.